Reading from the N-terminus, the 726-residue chain is Type VI secretion system spike protein VgrG1c (726 aa).

Residues 502–522 (ANATQSGTKSRSSKGGTPANF) are disordered. Positions 507–518 (SGTKSRSSKGGT) are enriched in low complexity.

It belongs to the VgrG protein family. In terms of assembly, forms homomultimers. Part of the type VI secretion system (T6SS).

The protein resides in the secreted. In terms of biological role, part of the H1 type VI secretion system (H1-T6SS) specialized secretion system, which delivers several virulence factors in both prokaryotic and eukaryotic cells during infection. Allows the delivery of the Tse5/RhsP1 toxin to target cells where it exerts its toxicity. The sequence is that of Type VI secretion system spike protein VgrG1c from Pseudomonas aeruginosa (strain ATCC 15692 / DSM 22644 / CIP 104116 / JCM 14847 / LMG 12228 / 1C / PRS 101 / PAO1).